The primary structure comprises 457 residues: Ribosome biogenesis protein YTM1 (457 aa).

The interval 8 to 89 is ubiquitin-like (UBL) domain; it reads VKVKFFTREK…ETTLTVEYTR (82 aa). Residues 99 to 457 form a sufficient for interaction with ERB1 and association with 66S pre-ribosomes region; the sequence is NFNNDDWVSA…INKGDNIFKN (359 aa). WD repeat units follow at residues 101-140, 142-180, 203-241, 282-322, 324-363, 370-410, and 421-457; these read NNDDWVSALDVSDDFRHIYSGSYDGVVRTWNMSGKVEKQY, GHTGAVKAVKYISNTRIVSAGNDRSLRLWKTKNDDGSVS, GHKAPVVSLDVASNSRILSASYDNTVALWSTIYKEMTAI, SHTG…CIDT, TTSYPLLSIAQMPTLNLLACGSSVRHITLHDPRVSSSAKI, GHKN…PMYT, and GVNDKVFAVKWAKSIGIISGGQDKKIQINKGDNIFKN. The segment at 172 to 191 is disordered; that stretch reads TKNDDGSVSNNTGDENDEEN.

Belongs to the WD repeat WDR12/YTM1 family. Component of the NOP7 complex, composed of ERB1, NOP7 and YTM1. The complex is held together by ERB1, which interacts with NOP7 via its N-terminal domain and with YTM1 via a high-affinity interaction between the seven-bladed beta-propeller domains of the 2 proteins. The NOP7 complex associates with the 66S pre-ribosome. Interacts (via UBL domain) with MDN1 (via VWFA/MIDAS domain).

It is found in the nucleus. It localises to the nucleolus. The protein resides in the nucleoplasm. Its function is as follows. Component of the NOP7 complex, which is required for maturation of the 25S and 5.8S ribosomal RNAs and formation of the 60S ribosome. This chain is Ribosome biogenesis protein YTM1, found in Candida glabrata (strain ATCC 2001 / BCRC 20586 / JCM 3761 / NBRC 0622 / NRRL Y-65 / CBS 138) (Yeast).